The primary structure comprises 167 residues: Peptidyl-prolyl cis-trans isomerase-like 3 (167 aa).

One can recognise a PPIase cyclophilin-type domain in the interval 1-153 (MSVTLHTNLG…QEIKLLNVTV (153 aa)).

This sequence belongs to the cyclophilin-type PPIase family. PPIL3 subfamily.

It carries out the reaction [protein]-peptidylproline (omega=180) = [protein]-peptidylproline (omega=0). In terms of biological role, PPIases accelerate the folding of proteins. It catalyzes the cis-trans isomerization of proline imidic peptide bonds in oligopeptides. This chain is Peptidyl-prolyl cis-trans isomerase-like 3 (CYP10), found in Cryptococcus neoformans var. neoformans serotype D (strain B-3501A) (Filobasidiella neoformans).